Reading from the N-terminus, the 734-residue chain is Polyribonucleotide nucleotidyltransferase (734 aa).

Mg(2+) is bound by residues D503 and D509. In terms of domain architecture, KH spans 570 to 629; sequence PKLSTIQVPVDAIGMIIGKGGETIRSITEETGAQINVDDDGTVTISSPNGESAAAAIETI. Residues 639–713 form the S1 motif domain; it reads GTIYMGKVKD…GKIRYALSIK (75 aa).

Belongs to the polyribonucleotide nucleotidyltransferase family. The cofactor is Mg(2+).

The protein localises to the cytoplasm. It carries out the reaction RNA(n+1) + phosphate = RNA(n) + a ribonucleoside 5'-diphosphate. Functionally, involved in mRNA degradation. Catalyzes the phosphorolysis of single-stranded polyribonucleotides processively in the 3'- to 5'-direction. This Chlorobium phaeobacteroides (strain BS1) protein is Polyribonucleotide nucleotidyltransferase.